The chain runs to 559 residues: MRLHRLRARLSAVACGLLLLLVRGQGQDSASPIRTTHTGQVLGSLVHVKGANAGVQTFLGIPFAKPPLGPLRFAPPEPPESWSGVRDGTTHPAMCLQDLTAVESEFLSQFNMTFPSDSMSEDCLYLSIYTPAHSHEGSNLPVMVWIHGGALVFGMASLYDGSMLAALENVVVVIIQYRLGVLGFFSTGDKHATGNWGYLDQVAALRWVQQNIAHFGGNPDRVTIFGESAGGTSVSSLVVSPISQGLFHGAIMESGVALLPGLIASSADVISTVVANLSACDQVDSEALVGCLRGKSKEEILAINKPFKMIPGVVDGVFLPRHPQELLASADFQPVPSIVGVNNNEFGWLIPKVMRIYDTQKEMDREASQAALQKMLTLLMLPPTFGDLLREEYIGDNGDPQTLQAQFQEMMADSMFVIPALQVAHFQCSRAPVYFYEFQHQPSWLKNIRPPHMKADHGDELPFVFRSFFGGNYIKFTEEEEQLSRKMMKYWANFARNGNPNGEGLPHWPLFDQEEQYLQLNLQPAVGRALKAHRLQFWKKALPQKIQELEEPEERHTEL.

A signal peptide spans 1–26 (MRLHRLRARLSAVACGLLLLLVRGQG). Q27 is subject to Pyrrolidone carboxylic acid. Residues C95 and C123 are joined by a disulfide bond. N111 is a glycosylation site (N-linked (GlcNAc...) asparagine). The active-site Acyl-ester intermediate is S228. N-linked (GlcNAc...) asparagine glycosylation is present at N276. Cysteines 280 and 291 form a disulfide. Residues E345 and H457 each act as charge relay system in the active site. A Prevents secretion from ER motif is present at residues 556–559 (HTEL).

It belongs to the type-B carboxylesterase/lipase family. Monomer. In terms of processing, glycosylated. In terms of tissue distribution, preferentially expressed in intestine with moderate expression in liver. Within the intestine, highest expression is found in small intestine with lower expression in colon and rectum.

The protein localises to the endoplasmic reticulum lumen. It carries out the reaction cocaine + H2O = ecgonine methyl ester + benzoate + H(+). The enzyme catalyses a carboxylic ester + H2O = an alcohol + a carboxylate + H(+). It catalyses the reaction 4-methylumbelliferyl acetate + H2O = 4-methylumbelliferone + acetate + H(+). The catalysed reaction is 2-(5Z,8Z,11Z,14Z-eicosatetraenoyl)-glycerol + H2O = glycerol + (5Z,8Z,11Z,14Z)-eicosatetraenoate + H(+). It carries out the reaction prostaglandin E2 1-glyceryl ester + H2O = prostaglandin E2 + glycerol + H(+). The enzyme catalyses prostaglandin F2alpha 1-glyceryl ester + H2O = prostaglandin F2alpha + glycerol + H(+). Functionally, involved in the detoxification of xenobiotics and in the activation of ester and amide prodrugs. Shows high catalytic efficiency for hydrolysis of cocaine, 4-methylumbelliferyl acetate, heroin and 6-monoacetylmorphine. Hydrolyzes aspirin, substrates with large alcohol group and small acyl group and endogenous lipids such as triacylglycerol. Converts monoacylglycerides to free fatty acids and glycerol. Hydrolyzes of 2-arachidonoylglycerol and prostaglandins. The polypeptide is Cocaine esterase (Homo sapiens (Human)).